A 331-amino-acid chain; its full sequence is CRISPR-associated endonuclease Cas1 (331 aa).

Mn(2+) contacts are provided by glutamate 158, histidine 223, and aspartate 238.

It belongs to the CRISPR-associated endonuclease Cas1 family. Homodimer, forms a heterotetramer with a Cas2 homodimer. It depends on Mg(2+) as a cofactor. Requires Mn(2+) as cofactor.

Functionally, CRISPR (clustered regularly interspaced short palindromic repeat), is an adaptive immune system that provides protection against mobile genetic elements (viruses, transposable elements and conjugative plasmids). CRISPR clusters contain spacers, sequences complementary to antecedent mobile elements, and target invading nucleic acids. CRISPR clusters are transcribed and processed into CRISPR RNA (crRNA). Acts as a dsDNA endonuclease. Involved in the integration of spacer DNA into the CRISPR cassette. Plasmid targeted by CRISPR locus P1 transform wild-type cells very poorly. The polypeptide is CRISPR-associated endonuclease Cas1 (Haloferax volcanii (strain ATCC 29605 / DSM 3757 / JCM 8879 / NBRC 14742 / NCIMB 2012 / VKM B-1768 / DS2) (Halobacterium volcanii)).